The sequence spans 397 residues: Ornithine aminotransferase (397 aa).

K255 is subject to N6-(pyridoxal phosphate)lysine.

It belongs to the class-III pyridoxal-phosphate-dependent aminotransferase family. OAT subfamily. Pyridoxal 5'-phosphate is required as a cofactor.

The protein resides in the cytoplasm. It catalyses the reaction a 2-oxocarboxylate + L-ornithine = L-glutamate 5-semialdehyde + an L-alpha-amino acid. The protein operates within amino-acid biosynthesis; L-proline biosynthesis; L-glutamate 5-semialdehyde from L-ornithine: step 1/1. Its function is as follows. Catalyzes the interconversion of ornithine to glutamate semialdehyde. The sequence is that of Ornithine aminotransferase from Macrococcus caseolyticus (strain JCSC5402) (Macrococcoides caseolyticum).